A 201-amino-acid polypeptide reads, in one-letter code: Small ribosomal subunit protein uS4 (201 aa).

The tract at residues 26–47 (LSKKNYPPGQHGNNRRRKTSEY) is disordered. The 63-residue stretch at 92 to 154 (ARLDNVVFRL…SKSLEVIADA (63 aa)) folds into the S4 RNA-binding domain.

Belongs to the universal ribosomal protein uS4 family. As to quaternary structure, part of the 30S ribosomal subunit. Contacts protein S5. The interaction surface between S4 and S5 is involved in control of translational fidelity.

Functionally, one of the primary rRNA binding proteins, it binds directly to 16S rRNA where it nucleates assembly of the body of the 30S subunit. In terms of biological role, with S5 and S12 plays an important role in translational accuracy. In Porphyromonas gingivalis (strain ATCC 33277 / DSM 20709 / CIP 103683 / JCM 12257 / NCTC 11834 / 2561), this protein is Small ribosomal subunit protein uS4.